The sequence spans 262 residues: Tropinone reductase homolog At2g30670 (262 aa).

13-37 (LVTGGASGIGHAIVEELAGLGARIY) contributes to the NADP(+) binding site. Ser-146 is a binding site for substrate. Tyr-159 acts as the Proton acceptor in catalysis.

The protein belongs to the short-chain dehydrogenases/reductases (SDR) family. SDR65C subfamily.

The polypeptide is Tropinone reductase homolog At2g30670 (Arabidopsis thaliana (Mouse-ear cress)).